Consider the following 472-residue polypeptide: ATP-dependent rRNA helicase rrp3 (472 aa).

The segment at Met1–Lys52 is disordered. Basic and acidic residues predominate over residues Ala10–Ala24. Positions Lys52–Ala80 match the Q motif motif. Residues Ile83 to Val254 form the Helicase ATP-binding domain. Ala96–Thr103 is an ATP binding site. Positions Asp202–Asp205 match the DEAD box motif. The Helicase C-terminal domain occupies Tyr282–Met426. Residues Met443–Gly472 are disordered. Positions Ser452–Arg462 are enriched in basic residues.

It belongs to the DEAD box helicase family. DDX47/RRP3 subfamily. In terms of assembly, interacts with the SSU processome.

It is found in the nucleus. The enzyme catalyses ATP + H2O = ADP + phosphate + H(+). In terms of biological role, ATP-dependent rRNA helicase required for pre-ribosomal RNA processing. Involved in the maturation of the 35S-pre-rRNA and to its cleavage to mature 18S rRNA. In Aspergillus oryzae (strain ATCC 42149 / RIB 40) (Yellow koji mold), this protein is ATP-dependent rRNA helicase rrp3.